The chain runs to 150 residues: Large ribosomal subunit protein bL9 (150 aa).

It belongs to the bacterial ribosomal protein bL9 family.

Functionally, binds to the 23S rRNA. The chain is Large ribosomal subunit protein bL9 from Burkholderia mallei (strain NCTC 10247).